The sequence spans 483 residues: Probable glycosyltransferase 6 (483 aa).

Topologically, residues 1–40 are cytoplasmic; that stretch reads MAASETAPFGVSAASKGGGGVAGARAQHGQLAVAGRVHDA. The helical; Signal-anchor for type II membrane protein transmembrane segment at 41 to 61 threads the bilayer; sequence LVFAAGAVAAVLVLLATASFL. At 62–483 the chain is on the lumenal side; it reads SPMPVTNLVA…PLPFDYPAAR (422 aa). Asn144 is a glycosylation site (N-linked (GlcNAc...) asparagine).

It belongs to the glycosyltransferase 34 family.

The protein localises to the golgi apparatus membrane. In terms of biological role, probable glycosyltransferase that may be involved in the biosynthesis of xyloglucan. This chain is Probable glycosyltransferase 6, found in Oryza sativa subsp. indica (Rice).